The chain runs to 264 residues: NADH-quinone oxidoreductase subunit B 1 (264 aa).

[4Fe-4S] cluster is bound by residues cysteine 42, cysteine 43, cysteine 108, and cysteine 138.

This sequence belongs to the complex I 20 kDa subunit family. As to quaternary structure, NDH-1 is composed of 14 different subunits. Subunits NuoB, C, D, E, F, and G constitute the peripheral sector of the complex. It depends on [4Fe-4S] cluster as a cofactor.

Its subcellular location is the cell membrane. It catalyses the reaction a quinone + NADH + 5 H(+)(in) = a quinol + NAD(+) + 4 H(+)(out). Its function is as follows. NDH-1 shuttles electrons from NADH, via FMN and iron-sulfur (Fe-S) centers, to quinones in the respiratory chain. The immediate electron acceptor for the enzyme in this species is believed to be ubiquinone. Couples the redox reaction to proton translocation (for every two electrons transferred, four hydrogen ions are translocated across the cytoplasmic membrane), and thus conserves the redox energy in a proton gradient. This is NADH-quinone oxidoreductase subunit B 1 from Chloroflexus aurantiacus (strain ATCC 29366 / DSM 635 / J-10-fl).